Reading from the N-terminus, the 158-residue chain is Ribonuclease H (158 aa).

In terms of domain architecture, RNase H type-1 spans 1-147 (MKVTIYTDGA…CDVLATTAAD (147 aa)). Positions 8, 52, 74, and 139 each coordinate Mg(2+).

Belongs to the RNase H family. As to quaternary structure, monomer. Mg(2+) is required as a cofactor.

The protein resides in the cytoplasm. The enzyme catalyses Endonucleolytic cleavage to 5'-phosphomonoester.. Endonuclease that specifically degrades the RNA of RNA-DNA hybrids. The chain is Ribonuclease H from Lachnoclostridium phytofermentans (strain ATCC 700394 / DSM 18823 / ISDg) (Clostridium phytofermentans).